The chain runs to 885 residues: DNA replication licensing factor REC (885 aa).

The disordered stretch occupies residues 36-76; sequence RVIPAGGNRQPNQGEPGAPDAPSVPPATRQPRGWSRTAGKR. A C4-type zinc finger spans residues 281–308; it reads CSRCQMEIAMRQRGTFQPRPYQCKRSEC. The MCM domain maps to 430–627; it reads SFKLLVQSIA…ERDMSLTAHV (198 aa). Position 473-480 (473-480) interacts with ATP; that stretch reads GDPGIGKT. Polar residues predominate over residues 796–805; that stretch reads SLKEGSSRQG. The interval 796–818 is disordered; it reads SLKEGSSRQGTRGGGGAGGGAGK. Positions 806–817 are enriched in gly residues; sequence TRGGGGAGGGAG.

The protein belongs to the MCM family.

Its subcellular location is the nucleus. In terms of biological role, required for meiotic DNA recombination in females. Probably not involved in DNA repair and recombination in somatic cells. The chain is DNA replication licensing factor REC (rec) from Drosophila melanogaster (Fruit fly).